The primary structure comprises 245 residues: Transcription factor FUP7 (245 aa).

Residues 10–37 constitute a DNA-binding region (zn(2)-C6 fungal-type); sequence CKTCRSRKQKCDGIRPACSRCRSLGLQC. The interval 162–216 is disordered; that stretch reads ESSSGNADYQHEDEVQSPAGAGDDMAVGDPYRDDSVDQDSIGQPPQRTESVGNMQ. A compositionally biased stretch (polar residues) spans 199 to 214; the sequence is QDSIGQPPQRTESVGN.

Its subcellular location is the nucleus. Transcription factor; part of the gene cluster that mediates the biosynthesis of the mycotoxin fusaproliferin (FUP) that belongs to the class of bicyclic sesterterpenoids. This chain is Transcription factor FUP7, found in Fusarium proliferatum (strain ET1) (Orchid endophyte fungus).